The primary structure comprises 496 residues: Polyamine oxidase 6 (496 aa).

A signal peptide spans 1–27 (MTKPTTMAIFLVLALSIAQLLPSLVAG). The FAD site is built by glutamate 61 and arginine 69. Asparagine 103 and asparagine 150 each carry an N-linked (GlcNAc...) asparagine glycan. An FAD-binding site is contributed by valine 261. Asparagine 278 carries an N-linked (GlcNAc...) asparagine glycan. Glutamate 454 is a binding site for FAD.

The protein belongs to the flavin monoamine oxidase family. The cofactor is FAD.

The protein resides in the secreted. Its subcellular location is the extracellular space. It is found in the apoplast. It participates in amine and polyamine degradation; spermine degradation. Functionally, flavoenzyme involved in polyamine back-conversion. Catalyzes the oxidation of the secondary amino group of polyamines, such as spermine and spermidine. This chain is Polyamine oxidase 6, found in Oryza sativa subsp. japonica (Rice).